The following is a 293-amino-acid chain: Nucleotide-binding protein Dole_0503 (293 aa).

11–18 is a binding site for ATP; that stretch reads GLSGSGKS. 62-65 serves as a coordination point for GTP; sequence DLRE.

The protein belongs to the RapZ-like family.

Its function is as follows. Displays ATPase and GTPase activities. The polypeptide is Nucleotide-binding protein Dole_0503 (Desulfosudis oleivorans (strain DSM 6200 / JCM 39069 / Hxd3) (Desulfococcus oleovorans)).